The primary structure comprises 132 residues: Small ribosomal subunit protein uS8c (132 aa).

This sequence belongs to the universal ribosomal protein uS8 family. Part of the 30S ribosomal subunit.

It localises to the plastid. Its subcellular location is the chloroplast. In terms of biological role, one of the primary rRNA binding proteins, it binds directly to 16S rRNA central domain where it helps coordinate assembly of the platform of the 30S subunit. The chain is Small ribosomal subunit protein uS8c (rps8) from Gracilaria tenuistipitata var. liui (Red alga).